The chain runs to 737 residues: Elongation factor 2 (737 aa).

The region spanning 18-262 (TRVRNIGIIA…AVIKFVPNPR (245 aa)) is the tr-type G domain. GTP-binding positions include 27-34 (AHVDHGKT), 93-97 (DTPGH), and 147-150 (NKVD). Position 604 is a diphthamide (histidine 604).

It belongs to the TRAFAC class translation factor GTPase superfamily. Classic translation factor GTPase family. EF-G/EF-2 subfamily.

The protein localises to the cytoplasm. In terms of biological role, catalyzes the GTP-dependent ribosomal translocation step during translation elongation. During this step, the ribosome changes from the pre-translocational (PRE) to the post-translocational (POST) state as the newly formed A-site-bound peptidyl-tRNA and P-site-bound deacylated tRNA move to the P and E sites, respectively. Catalyzes the coordinated movement of the two tRNA molecules, the mRNA and conformational changes in the ribosome. This chain is Elongation factor 2 (fusA), found in Sulfolobus acidocaldarius (strain ATCC 33909 / DSM 639 / JCM 8929 / NBRC 15157 / NCIMB 11770).